The primary structure comprises 325 residues: uncharacterized protein (325 aa).

Disordered regions lie at residues 32–65 (LSTP…VPPI) and 99–152 (GDSL…ASSG). A Globin domain is found at 153 to 291 (LVPSLNRLRI…LFTGVRDGYY (139 aa)).

This is an uncharacterized protein from Caenorhabditis elegans.